Here is a 342-residue protein sequence, read N- to C-terminus: Serpentine receptor class delta-33 (342 aa).

Transmembrane regions (helical) follow at residues 26 to 46, 62 to 82, 112 to 132, 148 to 168, 205 to 225, 261 to 281, and 287 to 307; these read IFVITVTILTSIGFLLNLLLL, IFLANTTITQLVYALFAVTSM, YVGILHLSLNSFISLMLSMIY, IILCIIGYFFPFLIFASCSNI, LIILTLAVTCGLVPIYFVMYW, IIPLVSVFPASIFWCLSQLGF, and YSYFIIPCLSLGCIADPVVTI.

This sequence belongs to the nematode receptor-like protein srd family.

Its subcellular location is the membrane. The protein is Serpentine receptor class delta-33 (srd-33) of Caenorhabditis elegans.